The following is a 294-amino-acid chain: Factor associated with metabolism and energy (294 aa).

Basic residues predominate over residues methionine 1–valine 12. 2 disordered regions span residues methionine 1 to threonine 28 and phenylalanine 255 to threonine 279. The N-myristoyl glycine moiety is linked to residue glycine 2. The segment covering proline 17–threonine 28 has biased composition (polar residues). Over residues lysine 268–threonine 279 the composition is skewed to basic and acidic residues.

Expressed in proximal tubules of the kidney.

It is found in the cell membrane. It localises to the cytoplasmic vesicle. May be involved in tuning the metabolism, energy expenditure, and excretion processes. This is Factor associated with metabolism and energy from Mus musculus (Mouse).